We begin with the raw amino-acid sequence, 112 residues long: MNLFYKMLLFGDPFFRLHKSAPCIRCCDKNAKSAQPDAHVPRTTISFQRLGTSVIYSRFNCTCNTQTYRYRIVYHRINQRGCKTLMFVWHRVTKHYCSGRKGHVHSPRHNND.

This is an uncharacterized protein from Saccharomyces cerevisiae (strain ATCC 204508 / S288c) (Baker's yeast).